Reading from the N-terminus, the 395-residue chain is Succinyl-diaminopimelate desuccinylase (395 aa).

His-74 is a binding site for Zn(2+). The active site involves Asp-76. Asp-107 lines the Zn(2+) pocket. The Proton acceptor role is filled by Glu-141. Residues Glu-142, Glu-170, and His-368 each coordinate Zn(2+).

This sequence belongs to the peptidase M20A family. DapE subfamily. Homodimer. Zn(2+) is required as a cofactor. The cofactor is Co(2+).

It catalyses the reaction N-succinyl-(2S,6S)-2,6-diaminopimelate + H2O = (2S,6S)-2,6-diaminopimelate + succinate. Its pathway is amino-acid biosynthesis; L-lysine biosynthesis via DAP pathway; LL-2,6-diaminopimelate from (S)-tetrahydrodipicolinate (succinylase route): step 3/3. Functionally, catalyzes the hydrolysis of N-succinyl-L,L-diaminopimelic acid (SDAP), forming succinate and LL-2,6-diaminopimelate (DAP), an intermediate involved in the bacterial biosynthesis of lysine and meso-diaminopimelic acid, an essential component of bacterial cell walls. In Brucella canis (strain ATCC 23365 / NCTC 10854 / RM-666), this protein is Succinyl-diaminopimelate desuccinylase.